We begin with the raw amino-acid sequence, 580 residues long: Bifunctional lycopene cyclase/phytoene synthase (580 aa).

The next 3 membrane-spanning stretches (helical) occupy residues 3-23 (WEYA…LAAV), 35-55 (KLVF…SYLI), and 65-85 (GVVV…FFVI). The N-linked (GlcNAc...) asparagine glycan is linked to Asn89. Helical transmembrane passes span 116 to 136 (IAGQ…VSSG), 139 to 159 (GMYM…LWSI), 171 to 191 (NTAL…TFAL), and 214 to 234 (IEEA…LIAC).

The protein in the N-terminal section; belongs to the lycopene beta-cyclase family. This sequence in the C-terminal section; belongs to the phytoene/squalene synthase family.

The protein localises to the membrane. It carries out the reaction all-trans-lycopene = gamma-carotene. It catalyses the reaction gamma-carotene = all-trans-beta-carotene. The enzyme catalyses 2 (2E,6E,10E)-geranylgeranyl diphosphate = 15-cis-phytoene + 2 diphosphate. Its pathway is carotenoid biosynthesis; beta-carotene biosynthesis. It participates in carotenoid biosynthesis; phytoene biosynthesis; all-trans-phytoene from geranylgeranyl diphosphate: step 1/1. Bifunctional enzyme; part of the car gene cluster that mediates the biosynthesis of neurosporaxanthin, a carboxylic apocarotenoid acting as an essential protective pigments and leading to orange pigmentation. CarAR catalyzes the first step of the pathway by converting geranylgeranyl diphosphate to phytoene, as well as the later cyclization step that transforms the carB product lycopene into gamma-carotene. CarAR also converts part of gamma-carotene into beta-carotene. Neurosporaxanthin is synthesized from geranyl-geranyl pyrophosphate (GGPP) through several enzymatic activities. Phytoene synthase activity performed by the bifunctional enzyme carAR first produces phytoene from geranyl-geranyl pyrophosphate (GGPP). The phytoene dehydrogenase carB then introduces 4 desaturations to lead to lycopene which is substrate of the carotene cyclase activity of carAR that leads to the production of gamma-carotene. CarB then performs a 5th desaturation reaction to yield torulene. Torulene is the substrate of the dioxidase carT that breaks the molecule, removing five carbon atoms to yield beta-apo-4'-carotenal, whereas the aldehyde dehydrogenase carD mediates the last step by converting beta-apo-4'-carotenal into neurosporaxanthin. This is Bifunctional lycopene cyclase/phytoene synthase from Gibberella fujikuroi (strain CBS 195.34 / IMI 58289 / NRRL A-6831) (Bakanae and foot rot disease fungus).